Consider the following 320-residue polypeptide: Polyadenylate-binding protein-interacting protein 13 (320 aa).

Residues 1-44 form a disordered region; the sequence is MAVAENVGVKVDSSNNQNIDNNTTSLVETKPSCSDDQTPKSKSS. Positions 12-44 are enriched in polar residues; sequence DSSNNQNIDNNTTSLVETKPSCSDDQTPKSKSS. The short motif at 65–75 is the PAM2-like element; sequence HLNPMAKEFVP. RRM domains lie at 137 to 212 and 234 to 310; these read RTVY…MSKT and KTVY…PSKT.

In Arabidopsis thaliana (Mouse-ear cress), this protein is Polyadenylate-binding protein-interacting protein 13 (CID13).